Consider the following 271-residue polypeptide: ATP synthase subunit a (271 aa).

Transmembrane regions (helical) follow at residues 38-58, 100-120, 146-166, 220-240, and 242-262; these read FWTL…LFLA, LIAP…LMDL, DVNI…FYSI, LIFI…LNVP, and AIFH…LTIV.

It belongs to the ATPase A chain family. In terms of assembly, F-type ATPases have 2 components, CF(1) - the catalytic core - and CF(0) - the membrane proton channel. CF(1) has five subunits: alpha(3), beta(3), gamma(1), delta(1), epsilon(1). CF(0) has three main subunits: a(1), b(2) and c(9-12). The alpha and beta chains form an alternating ring which encloses part of the gamma chain. CF(1) is attached to CF(0) by a central stalk formed by the gamma and epsilon chains, while a peripheral stalk is formed by the delta and b chains.

Its subcellular location is the cell inner membrane. Its function is as follows. Key component of the proton channel; it plays a direct role in the translocation of protons across the membrane. The sequence is that of ATP synthase subunit a from Enterobacter sp. (strain 638).